Consider the following 476-residue polypeptide: Siroheme synthase 1 (476 aa).

Residues 1–203 (MDYLPIFADL…GQTAEAQRQL (203 aa)) form a precorrin-2 dehydrogenase /sirohydrochlorin ferrochelatase region. NAD(+) is bound by residues 22–23 (EV) and 43–44 (QS). The residue at position 128 (S128) is a Phosphoserine. The interval 219 to 476 (GEIALVGAGP…VSRPAVVNLA (258 aa)) is uroporphyrinogen-III C-methyltransferase. P228 contacts S-adenosyl-L-methionine. The active-site Proton acceptor is D251. K273 functions as the Proton donor in the catalytic mechanism. Residues 304–306 (GGD), I309, 334–335 (TA), M386, and G415 each bind S-adenosyl-L-methionine.

The protein in the N-terminal section; belongs to the precorrin-2 dehydrogenase / sirohydrochlorin ferrochelatase family. This sequence in the C-terminal section; belongs to the precorrin methyltransferase family.

It catalyses the reaction uroporphyrinogen III + 2 S-adenosyl-L-methionine = precorrin-2 + 2 S-adenosyl-L-homocysteine + H(+). It carries out the reaction precorrin-2 + NAD(+) = sirohydrochlorin + NADH + 2 H(+). The enzyme catalyses siroheme + 2 H(+) = sirohydrochlorin + Fe(2+). It functions in the pathway cofactor biosynthesis; adenosylcobalamin biosynthesis; precorrin-2 from uroporphyrinogen III: step 1/1. The protein operates within cofactor biosynthesis; adenosylcobalamin biosynthesis; sirohydrochlorin from precorrin-2: step 1/1. It participates in porphyrin-containing compound metabolism; siroheme biosynthesis; precorrin-2 from uroporphyrinogen III: step 1/1. Its pathway is porphyrin-containing compound metabolism; siroheme biosynthesis; siroheme from sirohydrochlorin: step 1/1. It functions in the pathway porphyrin-containing compound metabolism; siroheme biosynthesis; sirohydrochlorin from precorrin-2: step 1/1. Its function is as follows. Multifunctional enzyme that catalyzes the SAM-dependent methylations of uroporphyrinogen III at position C-2 and C-7 to form precorrin-2 via precorrin-1. Then it catalyzes the NAD-dependent ring dehydrogenation of precorrin-2 to yield sirohydrochlorin. Finally, it catalyzes the ferrochelation of sirohydrochlorin to yield siroheme. In Serratia proteamaculans (strain 568), this protein is Siroheme synthase 1.